Consider the following 889-residue polypeptide: Mixed-linked glucan synthase 2 (889 aa).

Positions Ala34–Gly53 are disordered. The next 2 helical transmembrane spans lie at Ile93–Ala113 and Gly123–Leu143. The active site involves Asp213. Residues Glu265–Gln293 are a coiled coil. Residues Asp411 and Asp413 each coordinate substrate. Asp579 is an active-site residue. 6 helical membrane passes run Thr655–Ile675, Phe685–Phe705, Phe723–Leu743, Leu777–Gly797, Leu811–Leu831, and Ala842–Phe862.

It belongs to the glycosyltransferase 2 family. Plant cellulose synthase-like F subfamily.

The protein localises to the golgi apparatus membrane. Its function is as follows. Catalyzes both beta-1,3 and beta-1,4 glycosidic linkage on beta-D-glucan. Essential for (1,3;1,4)-beta-D-glucans synthesis in grasses and cereals (Poaceae). The mixed-linked glucans (which are not present in walls of dicotyledons or most other monocotyledonous plants) are particularly important constituents of the walls of the starchy endosperm and aleurone cells of cereal grains such as oats, wheat, rice and barley. They can account for up to 70% by weight of the wall. The chain is Mixed-linked glucan synthase 2 (CSLF2) from Oryza sativa subsp. japonica (Rice).